A 385-amino-acid chain; its full sequence is Probable thioesterase PNKD (385 aa).

Residues 32–58 (KASHNRTRALQSHSSPEGKEEPEPLSP) are disordered. Positions 172, 174, 176, 177, 229, 253, and 291 each coordinate Zn(2+).

This sequence belongs to the metallo-beta-lactamase superfamily. Glyoxalase II family. As to quaternary structure, isoform 2 interacts with the sarcomeric proteins, MRLC2, MYOM1 and ENO3. Requires Zn(2+) as cofactor. Post-translationally, undergoes cleavage at the N-terminus. In terms of tissue distribution, isoform 1 is only expressed in the brain. Isoform 2 is ubiquitously detected with highest expression in skeletal muscle and detected in myocardial myofibrils.

The protein localises to the cell membrane. Its subcellular location is the mitochondrion. The protein resides in the cytoplasm. It is found in the golgi apparatus. It localises to the endoplasmic reticulum. The catalysed reaction is a thioester + H2O = a thiol + a carboxylate + H(+). Probable thioesterase that may play a role in cellular detoxification processes; it likely acts on a yet-unknown alpha-hydroxythioester substrate. In vitro, it is able to catalyze the hydrolysis of S-D-lactoyl-glutathione to form glutathione and D-lactic acid at very low rate, though this reaction is not physiologically relevant in vivo. The polypeptide is Probable thioesterase PNKD (PNKD) (Homo sapiens (Human)).